The following is a 45-amino-acid chain: MVIFQLEYPLHHLVLFEVDADQPHEHEHDLILMGPFYLQQHRQTN.

Functionally, involved in T4 DNA replication. Important for the priming of leading strand DNA synthesis at oriE. Binds to ssDNA. The chain is DNA replication protein repEB (repEB) from Enterobacteria phage T4 (Bacteriophage T4).